Here is a 309-residue protein sequence, read N- to C-terminus: Homoserine O-succinyltransferase (309 aa).

Catalysis depends on Cys142, which acts as the Acyl-thioester intermediate. Substrate-binding residues include Lys163 and Ser192. His235 serves as the catalytic Proton acceptor. Residue Glu237 is part of the active site. Arg249 is a binding site for substrate.

Belongs to the MetA family. Homodimer.

It is found in the cytoplasm. The catalysed reaction is L-homoserine + succinyl-CoA = O-succinyl-L-homoserine + CoA. It participates in amino-acid biosynthesis; L-methionine biosynthesis via de novo pathway; O-succinyl-L-homoserine from L-homoserine: step 1/1. In terms of biological role, transfers a succinyl group from succinyl-CoA to L-homoserine, forming succinyl-L-homoserine. The polypeptide is Homoserine O-succinyltransferase (Salmonella arizonae (strain ATCC BAA-731 / CDC346-86 / RSK2980)).